The following is a 179-amino-acid chain: Large ribosomal subunit protein uL5 (179 aa).

The protein belongs to the universal ribosomal protein uL5 family. In terms of assembly, part of the 50S ribosomal subunit; part of the 5S rRNA/L5/L18/L25 subcomplex. Contacts the 5S rRNA and the P site tRNA. Forms a bridge to the 30S subunit in the 70S ribosome.

In terms of biological role, this is one of the proteins that bind and probably mediate the attachment of the 5S RNA into the large ribosomal subunit, where it forms part of the central protuberance. In the 70S ribosome it contacts protein S13 of the 30S subunit (bridge B1b), connecting the 2 subunits; this bridge is implicated in subunit movement. Contacts the P site tRNA; the 5S rRNA and some of its associated proteins might help stabilize positioning of ribosome-bound tRNAs. The protein is Large ribosomal subunit protein uL5 of Hamiltonella defensa subsp. Acyrthosiphon pisum (strain 5AT).